Consider the following 86-residue polypeptide: Omega-theraphotoxin-Hhn1a 1 (86 aa).

An N-terminal signal peptide occupies residues 1–21; the sequence is MKSIVFVALFGLALLAVVCSA. Residues 22 to 50 constitute a propeptide that is removed on maturation; it reads SEDAHKELLKEVVRAMVVDKTDAVQAEER. Intrachain disulfides connect Cys52-Cys66, Cys59-Cys71, and Cys65-Cys78.

Belongs to the neurotoxin 10 (Hwtx-1) family. 17 (Hntx-9) subfamily. Expressed by the venom gland.

Its subcellular location is the secreted. Functionally, ion channel inhibitor. The protein is Omega-theraphotoxin-Hhn1a 1 of Cyriopagopus hainanus (Chinese bird spider).